The sequence spans 24 residues: YTATRDNCCILDERFGSYCPTTCG.

As to quaternary structure, heterohexamer; disulfide linked. Contains 2 sets of 3 non-identical chains (alpha, beta and gamma). The 2 heterotrimers are in head to head conformation with the N-termini in a small central domain. In terms of processing, conversion of fibrinogen to fibrin is triggered by thrombin, which cleaves fibrinopeptides A and B from alpha and beta chains, and thus exposes the N-terminal polymerization sites responsible for the formation of the soft clot. The soft clot is converted into the hard clot by factor XIIIA which catalyzes the epsilon-(gamma-glutamyl)lysine cross-linking between gamma chains (stronger) and between alpha chains (weaker) of different monomers.

Its subcellular location is the secreted. In terms of biological role, together with fibrinogen alpha (FGA) and fibrinogen beta (FGB), polymerizes to form an insoluble fibrin matrix. Has a major function in hemostasis as one of the primary components of blood clots. In addition, functions during the early stages of wound repair to stabilize the lesion and guide cell migration during re-epithelialization. Was originally thought to be essential for platelet aggregation, based on in vitro studies using anticoagulated blood. However, subsequent studies have shown that it is not absolutely required for thrombus formation in vivo. Enhances expression of SELP in activated platelets via an ITGB3-dependent pathway. Maternal fibrinogen is essential for successful pregnancy. Fibrin deposition is also associated with infection, where it protects against IFNG-mediated hemorrhage. May also facilitate the antibacterial immune response via both innate and T-cell mediated pathways. This is Fibrinogen gamma chain (FGG) from Canis lupus familiaris (Dog).